A 179-amino-acid chain; its full sequence is ATP synthase subunit delta (179 aa).

This sequence belongs to the ATPase delta chain family. In terms of assembly, F-type ATPases have 2 components, F(1) - the catalytic core - and F(0) - the membrane proton channel. F(1) has five subunits: alpha(3), beta(3), gamma(1), delta(1), epsilon(1). F(0) has three main subunits: a(1), b(2) and c(10-14). The alpha and beta chains form an alternating ring which encloses part of the gamma chain. F(1) is attached to F(0) by a central stalk formed by the gamma and epsilon chains, while a peripheral stalk is formed by the delta and b chains.

Its subcellular location is the cell membrane. F(1)F(0) ATP synthase produces ATP from ADP in the presence of a proton or sodium gradient. F-type ATPases consist of two structural domains, F(1) containing the extramembraneous catalytic core and F(0) containing the membrane proton channel, linked together by a central stalk and a peripheral stalk. During catalysis, ATP synthesis in the catalytic domain of F(1) is coupled via a rotary mechanism of the central stalk subunits to proton translocation. Functionally, this protein is part of the stalk that links CF(0) to CF(1). It either transmits conformational changes from CF(0) to CF(1) or is implicated in proton conduction. This is ATP synthase subunit delta from Clostridium botulinum (strain ATCC 19397 / Type A).